A 273-amino-acid chain; its full sequence is GATA-type zinc finger protein 1 (273 aa).

2 disordered regions span residues 99–143 (RDSK…ERVD) and 172–201 (SSRSQESPADAVGGPAAHPGGTEAHSAGSE). A GATA-type zinc finger spans residues 208–232 (CASCRTQRTPLWRDAEDGTPLCNAC).

It localises to the nucleus. In terms of biological role, transcriptional regulator that plays a key role in germ cell development. Determines the oogenic fate by activating key genes for the oogenic program and meiotic prophase entry. Acts downstream of bone morphogenetic protein (BMP) by regulating expression of genes required for the oogenic programs, which are repressed by Polycomb activities in sexually uncommitted germ cells. Regulates expression of STRA8, a central downstream effector for the meiotic program. Acts independently of retinoic acid (RA). In males, not required for germ-cell sex determination, but required to allow the spermatogonia to efficiently accomplish the meiotic prophase. The chain is GATA-type zinc finger protein 1 from Homo sapiens (Human).